We begin with the raw amino-acid sequence, 572 residues long: Probable serine/threonine-protein kinase At1g54610 (572 aa).

The interval 1–89 is disordered; that stretch reads MGCVFGREAA…SNPSKHWRGE (89 aa). Over residues 9 to 40 the composition is skewed to low complexity; sequence AATTTTAEAKQAKSSKASSGVVVVGESSVTKS. Residues 47-67 show a composition bias toward basic and acidic residues; sequence DVEKKKNEEANGDKERKSSKG. Polar residues predominate over residues 74-83; the sequence is KPNPRLSNPS. Residues 118–402 enclose the Protein kinase domain; the sequence is FEKIDKIGQG…ASAALKSEFF (285 aa). ATP is bound by residues 124-132 and Lys-147; that span reads IGQGTYSNV. Catalysis depends on Asp-242, which acts as the Proton acceptor. 2 disordered regions span residues 409 to 474 and 526 to 572; these read CEPA…NVDR and SSFN…AVVA. A compositionally biased stretch (basic and acidic residues) spans 419 to 434; that stretch reads PSKEIDAKRRDEETRR. Residues 554–572 show a composition bias toward basic residues; the sequence is SRKKKDNTKSSKGKRAVVA.

This sequence belongs to the protein kinase superfamily. Ser/Thr protein kinase family.

It carries out the reaction L-seryl-[protein] + ATP = O-phospho-L-seryl-[protein] + ADP + H(+). The enzyme catalyses L-threonyl-[protein] + ATP = O-phospho-L-threonyl-[protein] + ADP + H(+). The sequence is that of Probable serine/threonine-protein kinase At1g54610 from Arabidopsis thaliana (Mouse-ear cress).